Reading from the N-terminus, the 61-residue chain is Large ribosomal subunit protein bL28 (61 aa).

The disordered stretch occupies residues Met-1–Arg-26. Basic residues predominate over residues Lys-9–His-19.

It belongs to the bacterial ribosomal protein bL28 family.

This Levilactobacillus brevis (strain ATCC 367 / BCRC 12310 / CIP 105137 / JCM 1170 / LMG 11437 / NCIMB 947 / NCTC 947) (Lactobacillus brevis) protein is Large ribosomal subunit protein bL28.